Here is a 206-residue protein sequence, read N- to C-terminus: Ras-related protein ralB-B (206 aa).

A GTP-binding site is contributed by 21-28 (GSGGVGKS). The Effector region motif lies at 43 to 51 (YEPTKADSY). Residues 68 to 72 (DTAGQ) and 128 to 131 (NKSD) each bind GTP. The segment covering 180-189 (KMSENKDKNG) has biased composition (basic and acidic residues). A disordered region spans residues 180-206 (KMSENKDKNGKKSGKSKKGFKQRCCLL). A compositionally biased stretch (basic residues) spans 190–200 (KKSGKSKKGFK). C203 carries the post-translational modification Cysteine methyl ester. A lipid anchor (S-geranylgeranyl cysteine) is attached at C203. A propeptide spans 204–206 (CLL) (removed in mature form).

It belongs to the small GTPase superfamily. Ras family. In terms of assembly, interacts with ralbp1 and rap1gds1.

The protein resides in the cell membrane. Its subcellular location is the midbody. It catalyses the reaction GTP + H2O = GDP + phosphate + H(+). In terms of biological role, multifunctional GTPase involved in a variety of cellular processes including gene expression, cell migration, cell proliferation, oncogenic transformation and membrane trafficking. Accomplishes its multiple functions by interacting with distinct downstream effectors. Acts as a GTP sensor for GTP-dependent exocytosis of dense core vesicles. Required both to stabilize the assembly of the exocyst complex and to localize functional exocyst complexes to the leading edge of migrating cells. Required for suppression of apoptosis. In late stages of cytokinesis, upon completion of the bridge formation between dividing cells, mediates exocyst recruitment to the midbody to drive abscission. Regulates the actin cytoskeleton to play a role in gastrulation or neurulation. During the cleavage stages, the GTP-bound form induces a cortical reaction that affects the localization of pigment granules. Activated by the FGF pathway via ras and ral-GDS, but independently of raf. Directs ralbp1 to the plasma membrane. Involved in ligand-dependent receptor mediated endocytosis of the EGF and insulin receptors. The sequence is that of Ras-related protein ralB-B (ralb-b) from Xenopus laevis (African clawed frog).